Reading from the N-terminus, the 123-residue chain is UPF0102 protein Maqu_2464 (123 aa).

The protein belongs to the UPF0102 family.

This Marinobacter nauticus (strain ATCC 700491 / DSM 11845 / VT8) (Marinobacter aquaeolei) protein is UPF0102 protein Maqu_2464.